Consider the following 166-residue polypeptide: Interferon gamma (166 aa).

Residues 1-23 (MKYTSYILAFQLCIILGSSSCYS) form the signal peptide. Gln24 carries the pyrrolidone carboxylic acid modification. N-linked (GlcNAc...) asparagine glycosylation is found at Asn39, Asn44, and Asn106.

Belongs to the type II (or gamma) interferon family. In terms of assembly, homodimer. As to expression, released primarily from activated T lymphocytes.

It localises to the secreted. Functionally, produced by lymphocytes activated by specific antigens or mitogens. IFN-gamma, in addition to having antiviral activity, has important immunoregulatory functions. It is a potent activator of macrophages, it has antiproliferative effects on transformed cells and it can potentiate the antiviral and antitumor effects of the type I interferons. The sequence is that of Interferon gamma (IFNG) from Marmota monax (Woodchuck).